A 123-amino-acid chain; its full sequence is Ribonuclease P protein component (123 aa).

This sequence belongs to the RnpA family. As to quaternary structure, consists of a catalytic RNA component (M1 or rnpB) and a protein subunit.

The enzyme catalyses Endonucleolytic cleavage of RNA, removing 5'-extranucleotides from tRNA precursor.. Functionally, RNaseP catalyzes the removal of the 5'-leader sequence from pre-tRNA to produce the mature 5'-terminus. It can also cleave other RNA substrates such as 4.5S RNA. The protein component plays an auxiliary but essential role in vivo by binding to the 5'-leader sequence and broadening the substrate specificity of the ribozyme. The protein is Ribonuclease P protein component of Herpetosiphon aurantiacus (strain ATCC 23779 / DSM 785 / 114-95).